The following is a 113-amino-acid chain: MQAKAVARTVRIAPRKVRLVVDLIRGKQVGEAIAILNHTPKTASPVVEKVLKSAIANAEHNYEMDINSLVVEKVFVDEGPTLKRFRPRAMGRASQINKRTSHITVVVSEKKEG.

It belongs to the universal ribosomal protein uL22 family. In terms of assembly, part of the 50S ribosomal subunit.

Functionally, this protein binds specifically to 23S rRNA; its binding is stimulated by other ribosomal proteins, e.g. L4, L17, and L20. It is important during the early stages of 50S assembly. It makes multiple contacts with different domains of the 23S rRNA in the assembled 50S subunit and ribosome. In terms of biological role, the globular domain of the protein is located near the polypeptide exit tunnel on the outside of the subunit, while an extended beta-hairpin is found that lines the wall of the exit tunnel in the center of the 70S ribosome. In Bacillus thuringiensis subsp. konkukian (strain 97-27), this protein is Large ribosomal subunit protein uL22.